We begin with the raw amino-acid sequence, 101 residues long: Small ribosomal subunit protein uS14 (101 aa).

Positions 1–23 (MAKKSSVEKNKRRRKMVAQQAPK) are disordered.

The protein belongs to the universal ribosomal protein uS14 family. In terms of assembly, part of the 30S ribosomal subunit. Contacts proteins S3 and S10.

Its function is as follows. Binds 16S rRNA, required for the assembly of 30S particles and may also be responsible for determining the conformation of the 16S rRNA at the A site. This chain is Small ribosomal subunit protein uS14, found in Rhodospirillum centenum (strain ATCC 51521 / SW).